Here is a 347-residue protein sequence, read N- to C-terminus: Actin-like protein MamK (347 aa).

Residues Lys-9, 20 to 21 (TS), and Asp-76 contribute to the ATP site. A Mg(2+)-binding site is contributed by Glu-143. ATP-binding positions include 164–166 (AGT), 218–222 (KEQFS), and Gly-289.

The protein belongs to the FtsA/MreB family. MamK subfamily. In terms of assembly, forms cytoplasmic filaments. Filaments are parallel (polar) and double-helical. MamK subunits from each of the two strands are juxtaposed, each monomer binds ADP. At cell poles and septa interacts with methyl-accepting chemotaxis protein Amb0944 (MCP10). Forms filaments with MamK-like protein.

Its subcellular location is the cytoplasm. It is found in the cytoskeleton. The protein localises to the magnetosome membrane. It carries out the reaction ATP + H2O = ADP + phosphate + H(+). Filament turnover is promoted by MamJ and/or LimJ which have overlapping function; at least one other protein is required for turnover. MamK filament dynamics are probably required for the assembly or maintenance of the magnetosome chain. Functionally, protein with ATPase activity which forms dynamic cytoplasmic filaments (probably with paralog MamK-like) that organize magnetosomes into long chains running parallel to the long axis of the cell. Turnover of MamK filaments is probably promoted by MamK-like, which provides a monomer pool. Forms twisted filaments in the presence of ATP or GTP. Serves to close gaps between magnetosomes in the chain. Interaction with MCP10 is involved in controlling the response to magnetic fields, possibly by controlling flagellar rotation. Expression in E.coli yields a filament in the cell's longitudinal axis; the protein nucleates at several sites and one extremity of the filament is located at the cell pole. The sequence is that of Actin-like protein MamK (mamK) from Paramagnetospirillum magneticum (strain ATCC 700264 / AMB-1) (Magnetospirillum magneticum).